The following is a 104-amino-acid chain: ATP-dependent Clp protease adapter protein ClpS (104 aa).

A disordered region spans residues 1-20; it reads MAEETPTRSPGGAAVLDKAP.

It belongs to the ClpS family. As to quaternary structure, binds to the N-terminal domain of the chaperone ClpA.

In terms of biological role, involved in the modulation of the specificity of the ClpAP-mediated ATP-dependent protein degradation. In Synechococcus sp. (strain CC9902), this protein is ATP-dependent Clp protease adapter protein ClpS.